We begin with the raw amino-acid sequence, 847 residues long: Ras GTPase-activating protein 2 (847 aa).

Residues 1–18 (MAAAAPAAAALTEAPAVP) are compositionally biased toward low complexity. Positions 1-31 (MAAAAPAAAALTEAPAVPGTAEPETGDEDSR) are disordered. Position 2 is an N-acetylalanine (Ala2). 2 consecutive C2 domains span residues 19–137 (GTAE…ETWF) and 148–288 (VQGK…QAWY). The Ras-GAP domain occupies 371–588 (NKLVPFITAV…TDVKKFLDEI (218 aa)). Ser554 is modified (phosphoserine). Residues 603–704 (VHLKEGEMYK…WIDMLCRVSR (102 aa)) enclose the PH domain. Residues 706 to 742 (NHNRLSSFHPSAYLNGNWLCCQETSEGTPGCKPCTAG) form a Btk-type zinc finger. His714, Cys725, Cys726, and Cys736 together coordinate Zn(2+). The segment at 819-847 (DEPHEKYRKKRSSSAKYGSKENPIVGKIS) is disordered.

In terms of tissue distribution, widely expressed. Higher expression in brain, placenta, and kidney.

The protein localises to the cell membrane. Inhibitory regulator of the Ras-cyclic AMP pathway. May bind inositol tetrakisphosphate (IP4) and phospholipids. The chain is Ras GTPase-activating protein 2 (Rasa2) from Rattus norvegicus (Rat).